The following is a 173-amino-acid chain: Crossover junction endodeoxyribonuclease RuvC (173 aa).

Catalysis depends on residues Asp-8, Glu-67, and Asp-139. Residues Asp-8, Glu-67, and Asp-139 each coordinate Mg(2+).

Belongs to the RuvC family. As to quaternary structure, homodimer which binds Holliday junction (HJ) DNA. The HJ becomes 2-fold symmetrical on binding to RuvC with unstacked arms; it has a different conformation from HJ DNA in complex with RuvA. In the full resolvosome a probable DNA-RuvA(4)-RuvB(12)-RuvC(2) complex forms which resolves the HJ. Requires Mg(2+) as cofactor.

Its subcellular location is the cytoplasm. It catalyses the reaction Endonucleolytic cleavage at a junction such as a reciprocal single-stranded crossover between two homologous DNA duplexes (Holliday junction).. The RuvA-RuvB-RuvC complex processes Holliday junction (HJ) DNA during genetic recombination and DNA repair. Endonuclease that resolves HJ intermediates. Cleaves cruciform DNA by making single-stranded nicks across the HJ at symmetrical positions within the homologous arms, yielding a 5'-phosphate and a 3'-hydroxyl group; requires a central core of homology in the junction. The consensus cleavage sequence is 5'-(A/T)TT(C/G)-3'. Cleavage occurs on the 3'-side of the TT dinucleotide at the point of strand exchange. HJ branch migration catalyzed by RuvA-RuvB allows RuvC to scan DNA until it finds its consensus sequence, where it cleaves and resolves the cruciform DNA. This is Crossover junction endodeoxyribonuclease RuvC from Vibrio parahaemolyticus serotype O3:K6 (strain RIMD 2210633).